The chain runs to 529 residues: Peptide chain release factor 3 (529 aa).

One can recognise a tr-type G domain in the interval 11-280; sequence SKRRTFAIIS…GLTDWAPAPL (270 aa). GTP contacts are provided by residues 20–27, 88–92, and 142–145; these read SHPDAGKT, DTPGH, and NKLD.

The protein belongs to the TRAFAC class translation factor GTPase superfamily. Classic translation factor GTPase family. PrfC subfamily.

It localises to the cytoplasm. In terms of biological role, increases the formation of ribosomal termination complexes and stimulates activities of RF-1 and RF-2. It binds guanine nucleotides and has strong preference for UGA stop codons. It may interact directly with the ribosome. The stimulation of RF-1 and RF-2 is significantly reduced by GTP and GDP, but not by GMP. The sequence is that of Peptide chain release factor 3 from Vibrio vulnificus (strain CMCP6).